The primary structure comprises 342 residues: MADDLEQQSQGWLSSWLPTWRPTSMSQLKNVEARILQCLQNKFLARYVSLPNQNKIWTVTVSPEQNDRTPLVMVHGFGGGVGLWILNMDSLSARRTLHTFDLLGFGRSSRPAFPRDPEGAEDEFVTSIETWRETMGIPSMILLGHSLGGFLATSYSIKYPDRVKHLILVDPWGFPLRPTNPSEIRAPPAWVKAVASVLGRSNPLAVLRVAGPWGPGLVQRFRPDFKRKFADFFEDDTISEYIYHCNAQNPSGETAFKAMMESFGWARRPMLERIHLIRKDVPITMIYGSDTWIDTSTGKKVKMQRPDSYVRDMEIKGASHHVYADQPHIFNAVVEEICDSVD.

An AB hydrolase-1 domain is found at 70 to 201; that stretch reads PLVMVHGFGG…KAVASVLGRS (132 aa).

Belongs to the peptidase S33 family. ABHD4/ABHD5 subfamily.

The catalysed reaction is N-hexadecanoyl-1,2-di-(9Z-octadecenoyl)-sn-glycero-3-phosphoethanolamine + H2O = N-hexadecanoyl-1-(9Z-octadecenoyl)-sn-glycero-3-phosphoethanolamine + (9Z)-octadecenoate + H(+). It carries out the reaction an N-acyl-1,2-diacyl-sn-glycero-3-phosphoethanolamine + H2O = N,1-diacyl-sn-glycero-3-phosphoethanolamine + a fatty acid + H(+). It catalyses the reaction N-hexadecanoyl-1-(9Z-octadecenoyl)-sn-glycero-3-phosphoethanolamine + H2O = N-hexadecanoyl-sn-glycero-3-phosphoethanolamine + (9Z)-octadecenoate + H(+). The enzyme catalyses N-octadecanoyl-1-(9Z-octadecenoyl)-sn-glycero-3-phosphoethanolamine + H2O = N-octadecanoyl-sn-glycero-3-phospho-ethanolamine + (9Z)-octadecenoate + H(+). The catalysed reaction is N-eicosanoyl-1-(9Z-octadecenoyl)-sn-glycero-3-phosphoethanolamine + H2O = N-eicosanoyl-sn-glycero-3-phosphoethanolamine + (9Z)-octadecenoate + H(+). It carries out the reaction N,1-di-(9Z-octadecenoyl)-sn-glycero-3-phosphoethanolamine + H2O = N-(9Z-octadecenoyl)-sn-glycero-3-phosphoethanolamine + (9Z)-octadecenoate + H(+). It catalyses the reaction N-(5Z,8Z,11Z,14Z-eicosatetraenoyl)-1-(9Z-octadecenoyl)-sn-glycero-3-phosphoethanolamine + H2O = N-(5Z,8Z,11Z,14Z-eicosatetraenoyl)-sn-glycero-3-phosphoethanolamine + (9Z)-octadecenoate + H(+). The enzyme catalyses 1-octadecanoyl-2-(9Z-octadecenoyl)-sn-glycero-3-phospho-(N-hexadecanoyl)-serine + H2O = 1-octadecanoyl-2-hydroxy-sn-glycero-3-phospho-(N-hexadecanoyl)-serine + (9Z)-octadecenoate + H(+). The catalysed reaction is 1-O-(1Z-octadecenoyl)-2-(9Z-octadecenoyl)-sn-glycero-3-phospho-N-hexadecanoyl-ethanolamine + H2O = 1-O-(1Z-octadecenyl)-sn-glycero-3-phospho-N-hexadecanoyl-ethanolamine + (9Z)-octadecenoate + H(+). It carries out the reaction N,1-diacyl-sn-glycero-3-phosphoethanolamine + H2O = N-acyl-sn-glycero-3-phosphoethanolamine + a fatty acid + H(+). In terms of biological role, lysophospholipase selective for N-acyl phosphatidylethanolamine (NAPE). Contributes to the biosynthesis of N-acyl ethanolamines, including the endocannabinoid anandamide by hydrolyzing the sn-1 and sn-2 acyl chains from N-acyl phosphatidylethanolamine (NAPE) generating glycerophospho-N-acyl ethanolamine (GP-NAE), an intermediate for N-acyl ethanolamine biosynthesis. Hydrolyzes substrates bearing saturated, monounsaturated, polyunsaturated N-acyl chains. Shows no significant activity towards other lysophospholipids, including lysophosphatidylcholine, lysophosphatidylethanolamine and lysophosphatidylserine. The polypeptide is (Lyso)-N-acylphosphatidylethanolamine lipase (Homo sapiens (Human)).